The following is a 265-amino-acid chain: Mlc titration factor A (265 aa).

4 residues coordinate Zn(2+): histidine 111, histidine 148, histidine 152, and glutamate 211.

This sequence belongs to the MtfA family. Interacts with Mlc. Zn(2+) serves as cofactor.

The protein localises to the cytoplasm. In terms of biological role, involved in the modulation of the activity of the glucose-phosphotransferase system (glucose-PTS). Interacts with the transcriptional repressor Mlc, preventing its interaction with DNA and leading to the modulation of expression of genes regulated by Mlc, including ptsG, which encodes the PTS system glucose-specific EIICB component. Its function is as follows. Shows zinc-dependent metallopeptidase activity. The chain is Mlc titration factor A from Salmonella gallinarum (strain 287/91 / NCTC 13346).